Reading from the N-terminus, the 302-residue chain is MDQLTRKNRLEFNKLQKRLRRHVGRAIADYNMIEEGDRVMVCLSGGKDSYGMLDILLSLQRTAPVKFELVAVNLDQKQPGFPEHVLPAYLDTLDIEYHIVERDTYSIVKSVVPEGKTTCGLCSRLRRGTLYGFAEKIGATKIALGHHRDDIVETLFLNLFYAGRLKAMPPKLRSDDKRNIIIRPLAYCPEEDLEAFAQARAFPIIPCNLCGSQENLQRQVIKEMLRGWDKQFPGRVETIFAALQRVSPSQLADNALFNFTDLTLDRSAPAAIEDDAPLSWSDLATTEDTTDAVNIINAVNIG.

The PP-loop motif signature appears at 44–49 (SGGKDS). Residues cysteine 119, cysteine 122, and cysteine 210 each contribute to the [4Fe-4S] cluster site.

This sequence belongs to the TtcA family. As to quaternary structure, homodimer. Mg(2+) serves as cofactor. The cofactor is [4Fe-4S] cluster.

The protein resides in the cytoplasm. The catalysed reaction is cytidine(32) in tRNA + S-sulfanyl-L-cysteinyl-[cysteine desulfurase] + AH2 + ATP = 2-thiocytidine(32) in tRNA + L-cysteinyl-[cysteine desulfurase] + A + AMP + diphosphate + H(+). It participates in tRNA modification. Catalyzes the ATP-dependent 2-thiolation of cytidine in position 32 of tRNA, to form 2-thiocytidine (s(2)C32). The sulfur atoms are provided by the cysteine/cysteine desulfurase (IscS) system. This is tRNA-cytidine(32) 2-sulfurtransferase from Teredinibacter turnerae (strain ATCC 39867 / T7901).